The sequence spans 287 residues: Protease HtpX (287 aa).

2 helical membrane passes run 4-24 and 33-53; these read IFLL…VMSI and GGLL…SLAI. His139 contributes to the Zn(2+) binding site. Glu140 is a catalytic residue. His143 contacts Zn(2+). The next 2 membrane-spanning stretches (helical) occupy residues 154-174 and 195-215; these read LIQG…AGII and AVVF…VAYF. A Zn(2+)-binding site is contributed by Glu220.

This sequence belongs to the peptidase M48B family. Zn(2+) serves as cofactor.

Its subcellular location is the cell inner membrane. The polypeptide is Protease HtpX (Shewanella frigidimarina (strain NCIMB 400)).